We begin with the raw amino-acid sequence, 196 residues long: MLDFIKGEIVELIPDSVIIETGNIGYMLFISLNTYFSLTKIKSCKLYIYEVIREETHQLFGFIDKKERQLFTHLISVPGVGANIARMVLSSLSVCELEEIIFSGNVSALQALKGIGNKTAERIIIDLKDKVKPDNIPSSDTIITNISSNITKEAITALITLGFSQSASQKVVNKIVSNNSSSTTIEQIIKKALKLL.

The domain I stretch occupies residues 1-63 (MLDFIKGEIV…EETHQLFGFI (63 aa)). The domain II stretch occupies residues 64 to 142 (DKKERQLFTH…PDNIPSSDTI (79 aa)). A flexible linker region spans residues 143–146 (ITNI). The domain III stretch occupies residues 146–196 (ISSNITKEAITALITLGFSQSASQKVVNKIVSNNSSSTTIEQIIKKALKLL).

Belongs to the RuvA family. As to quaternary structure, homotetramer. Forms an RuvA(8)-RuvB(12)-Holliday junction (HJ) complex. HJ DNA is sandwiched between 2 RuvA tetramers; dsDNA enters through RuvA and exits via RuvB. An RuvB hexamer assembles on each DNA strand where it exits the tetramer. Each RuvB hexamer is contacted by two RuvA subunits (via domain III) on 2 adjacent RuvB subunits; this complex drives branch migration. In the full resolvosome a probable DNA-RuvA(4)-RuvB(12)-RuvC(2) complex forms which resolves the HJ.

The protein localises to the cytoplasm. In terms of biological role, the RuvA-RuvB-RuvC complex processes Holliday junction (HJ) DNA during genetic recombination and DNA repair, while the RuvA-RuvB complex plays an important role in the rescue of blocked DNA replication forks via replication fork reversal (RFR). RuvA specifically binds to HJ cruciform DNA, conferring on it an open structure. The RuvB hexamer acts as an ATP-dependent pump, pulling dsDNA into and through the RuvAB complex. HJ branch migration allows RuvC to scan DNA until it finds its consensus sequence, where it cleaves and resolves the cruciform DNA. The chain is Holliday junction branch migration complex subunit RuvA from Azobacteroides pseudotrichonymphae genomovar. CFP2.